Consider the following 311-residue polypeptide: L-lactate dehydrogenase (311 aa).

Residues V12, D33, K38, Y63, and 77-78 (GA) contribute to the NAD(+) site. Residues Q80, R86, and 118–121 (NPVD) contribute to the substrate site. Residues 116 to 118 (VTN) and S141 each bind NAD(+). A substrate-binding site is contributed by 146-149 (DSAR). Residues R151 and H166 each coordinate beta-D-fructose 1,6-bisphosphate. H173 serves as the catalytic Proton acceptor. Y219 is modified (phosphotyrosine). Residue T228 participates in substrate binding.

This sequence belongs to the LDH/MDH superfamily. LDH family. In terms of assembly, homotetramer.

It is found in the cytoplasm. It carries out the reaction (S)-lactate + NAD(+) = pyruvate + NADH + H(+). The protein operates within fermentation; pyruvate fermentation to lactate; (S)-lactate from pyruvate: step 1/1. Allosterically activated by fructose 1,6-bisphosphate (FBP). Catalyzes the conversion of lactate to pyruvate. In Thermoanaerobacter pseudethanolicus (strain ATCC 33223 / 39E) (Clostridium thermohydrosulfuricum), this protein is L-lactate dehydrogenase.